A 122-amino-acid polypeptide reads, in one-letter code: Small ribosomal subunit protein uS13 (122 aa).

The tract at residues 97–122 is disordered; the sequence is PVRGQRTHTNARTRKGPARAIAGKKK.

This sequence belongs to the universal ribosomal protein uS13 family. As to quaternary structure, part of the 30S ribosomal subunit. Forms a loose heterodimer with protein S19. Forms two bridges to the 50S subunit in the 70S ribosome.

In terms of biological role, located at the top of the head of the 30S subunit, it contacts several helices of the 16S rRNA. In the 70S ribosome it contacts the 23S rRNA (bridge B1a) and protein L5 of the 50S subunit (bridge B1b), connecting the 2 subunits; these bridges are implicated in subunit movement. Contacts the tRNAs in the A and P-sites. This is Small ribosomal subunit protein uS13 from Bartonella bacilliformis (strain ATCC 35685 / KC583 / Herrer 020/F12,63).